Consider the following 75-residue polypeptide: DNA-directed RNA polymerase subunit omega (75 aa).

The protein belongs to the RNA polymerase subunit omega family. In cyanobacteria the RNAP catalytic core is composed of 2 alpha, 1 beta, 1 beta', 1 gamma and 1 omega subunit. When a sigma factor is associated with the core the holoenzyme is formed, which can initiate transcription.

It catalyses the reaction RNA(n) + a ribonucleoside 5'-triphosphate = RNA(n+1) + diphosphate. Its function is as follows. Promotes RNA polymerase assembly. Latches the N- and C-terminal regions of the beta' subunit thereby facilitating its interaction with the beta and alpha subunits. This chain is DNA-directed RNA polymerase subunit omega, found in Picosynechococcus sp. (strain ATCC 27264 / PCC 7002 / PR-6) (Agmenellum quadruplicatum).